Consider the following 689-residue polypeptide: Translation initiation factor IF-2 (689 aa).

The disordered stretch occupies residues 41-109; sequence DYERVFGGGN…EAPAAEEREA (69 aa). Positions 61 to 70 are enriched in basic residues; sequence RKGRQKKRRR. Residues 80–94 are compositionally biased toward low complexity; sequence RGPRAAAPSRPSRGR. Residues 96–109 are compositionally biased toward basic and acidic residues; that stretch reads AAREEAPAAEEREA. A tr-type G domain is found at 192–361; it reads EKPPVITVMG…LVVAELEELR (170 aa). The tract at residues 201–208 is G1; sequence GHVDHGKT. 201–208 contacts GTP; that stretch reads GHVDHGKT. The segment at 226 to 230 is G2; the sequence is GITQH. The G3 stretch occupies residues 247 to 250; that stretch reads DTPG. GTP is bound by residues 247–251 and 301–304; these read DTPGH and NKID. Residues 301–304 are G4; sequence NKID. Residues 337–339 form a G5 region; it reads SAK.

Belongs to the TRAFAC class translation factor GTPase superfamily. Classic translation factor GTPase family. IF-2 subfamily.

The protein localises to the cytoplasm. Its function is as follows. One of the essential components for the initiation of protein synthesis. Protects formylmethionyl-tRNA from spontaneous hydrolysis and promotes its binding to the 30S ribosomal subunits. Also involved in the hydrolysis of GTP during the formation of the 70S ribosomal complex. The protein is Translation initiation factor IF-2 of Rubrobacter xylanophilus (strain DSM 9941 / JCM 11954 / NBRC 16129 / PRD-1).